The primary structure comprises 525 residues: Phosphoenolpyruvate carboxykinase (ATP) (525 aa).

Positions 54, 190, and 196 each coordinate substrate. Residues Lys196, His215, and 231-239 (GLSGTGKTT) each bind ATP. Positions 196 and 215 each coordinate Mn(2+). Asp252 lines the Mn(2+) pocket. Positions 280, 316, and 441 each coordinate ATP. A substrate-binding site is contributed by Arg316.

This sequence belongs to the phosphoenolpyruvate carboxykinase (ATP) family. The cofactor is Mn(2+).

It is found in the cytoplasm. It carries out the reaction oxaloacetate + ATP = phosphoenolpyruvate + ADP + CO2. Its pathway is carbohydrate biosynthesis; gluconeogenesis. Functionally, involved in the gluconeogenesis. Catalyzes the conversion of oxaloacetate (OAA) to phosphoenolpyruvate (PEP) through direct phosphoryl transfer between the nucleoside triphosphate and OAA. The sequence is that of Phosphoenolpyruvate carboxykinase (ATP) from Nitratiruptor sp. (strain SB155-2).